The following is a 593-amino-acid chain: Probable metalloendopeptidase G1-type (593 aa).

H41 lines the Zn(2+) pocket. Residue E44 is part of the active site. Residue H45 participates in Zn(2+) binding.

This sequence belongs to the peptidase M44 family. It depends on Zn(2+) as a cofactor.

Seems to be involved in viral proteins maturation by cleavage at Ala-Gly-|-Xaa motifs. The protein is Probable metalloendopeptidase G1-type of Homo sapiens (Human).